A 45-amino-acid chain; its full sequence is Amphipathic peptide Hj0164 (45 aa).

The signal sequence occupies residues 1-23 (MKSQAFFLLFLVVLLLATTQSEA). Phe-33 bears the Phenylalanine amide mark. Positions 37-45 (SLRDVDTMK) are excised as a propeptide.

This sequence belongs to the non-disulfide-bridged peptide (NDBP) superfamily. Short antimicrobial peptide (group 4) family. Expressed by the venom gland.

It localises to the secreted. It is found in the target cell membrane. Its function is as follows. Amphipathic peptide that shows antibacterial activities. The chain is Amphipathic peptide Hj0164 from Hottentotta judaicus (Black scorpion).